The primary structure comprises 592 residues: Arginine--tRNA ligase (592 aa).

Residues 123–133 (PNTNKPLHLGH) carry the 'HIGH' region motif.

It belongs to the class-I aminoacyl-tRNA synthetase family. In terms of assembly, monomer.

The protein resides in the cytoplasm. The enzyme catalyses tRNA(Arg) + L-arginine + ATP = L-arginyl-tRNA(Arg) + AMP + diphosphate. The polypeptide is Arginine--tRNA ligase (Flavobacterium johnsoniae (strain ATCC 17061 / DSM 2064 / JCM 8514 / BCRC 14874 / CCUG 350202 / NBRC 14942 / NCIMB 11054 / UW101) (Cytophaga johnsonae)).